Reading from the N-terminus, the 118-residue chain is uncharacterized protein (118 aa).

The helical transmembrane segment at 95-115 threads the bilayer; the sequence is IIINLVIILAMYAPEIIGKLL.

It belongs to the M.jannaschii MJ0023/MJ0349/MJ1072/MJ1074/MJ1107/MJECL16 family.

Its subcellular location is the membrane. This is an uncharacterized protein from Methanocaldococcus jannaschii (strain ATCC 43067 / DSM 2661 / JAL-1 / JCM 10045 / NBRC 100440) (Methanococcus jannaschii).